Reading from the N-terminus, the 179-residue chain is Large ribosomal subunit protein uL5 (179 aa).

The protein belongs to the universal ribosomal protein uL5 family. Part of the 50S ribosomal subunit; part of the 5S rRNA/L5/L18/L25 subcomplex. Contacts the 5S rRNA and the P site tRNA. Forms a bridge to the 30S subunit in the 70S ribosome.

Functionally, this is one of the proteins that bind and probably mediate the attachment of the 5S RNA into the large ribosomal subunit, where it forms part of the central protuberance. In the 70S ribosome it contacts protein S13 of the 30S subunit (bridge B1b), connecting the 2 subunits; this bridge is implicated in subunit movement. Contacts the P site tRNA; the 5S rRNA and some of its associated proteins might help stabilize positioning of ribosome-bound tRNAs. This Mannheimia succiniciproducens (strain KCTC 0769BP / MBEL55E) protein is Large ribosomal subunit protein uL5.